Consider the following 260-residue polypeptide: Ribosomal RNA small subunit methyltransferase A (260 aa).

Positions 16, 18, 43, 64, 86, and 108 each coordinate S-adenosyl-L-methionine.

This sequence belongs to the class I-like SAM-binding methyltransferase superfamily. rRNA adenine N(6)-methyltransferase family. RsmA subfamily.

Its subcellular location is the cytoplasm. The catalysed reaction is adenosine(1518)/adenosine(1519) in 16S rRNA + 4 S-adenosyl-L-methionine = N(6)-dimethyladenosine(1518)/N(6)-dimethyladenosine(1519) in 16S rRNA + 4 S-adenosyl-L-homocysteine + 4 H(+). Functionally, specifically dimethylates two adjacent adenosines (A1518 and A1519) in the loop of a conserved hairpin near the 3'-end of 16S rRNA in the 30S particle. May play a critical role in biogenesis of 30S subunits. The polypeptide is Ribosomal RNA small subunit methyltransferase A (Buchnera aphidicola subsp. Baizongia pistaciae (strain Bp)).